A 2252-amino-acid polypeptide reads, in one-letter code: RNA1 polyprotein (2252 aa).

The Cytoplasmic portion of the chain corresponds to 565–1140 (MITTLAQSIF…QGREFIVSNG (576 aa)). One can recognise an SF3 helicase domain in the interval 733 to 899 (MKDLLELQKR…PGVIFDPDNA (167 aa)). ATP is bound at residue 763–770 (GPSHCGKS). Residues 1141–1161 (GGILMIAAAIILVLVCGWGFW) traverse the membrane as a helical segment. At 1162–1187 (KAFVGLFTGSMSLGAALAGCQEAEVK) the chain is on the lumenal side. Residues 1213–1422 (SYARSQAGNG…WACILPNPHL (210 aa)) form the Peptidase C3 domain. Residues His1256, Glu1294, and Cys1386 each act as for picornain 3C-like protease activity in the active site. The RdRp catalytic domain maps to 1697–1825 (NEAINCDYSG…SVSPAVASWF (129 aa)).

The protein belongs to the nepoviruses RNA1 polyprotein family. In terms of processing, specific enzymatic cleavages by picornain 3C-like protease in vivo yield mature proteins. Picornain 3C-like protease is autocatalytically processed. Post-translationally, VPg is uridylylated by the polymerase and is covalently linked to the 5'-end of genomic RNA. This uridylylated form acts as a nucleotide-peptide primer for the polymerase.

The protein localises to the host endoplasmic reticulum lumen. The protein resides in the host endoplasmic reticulum membrane. The enzyme catalyses RNA(n) + a ribonucleoside 5'-triphosphate = RNA(n+1) + diphosphate. Its function is as follows. Picornain 3C-like protease is a thiol protease that cleaves the P1 and P2 polyproteins. The sequence is that of RNA1 polyprotein from Apium graveolens (Celery).